Reading from the N-terminus, the 682-residue chain is TBC1 domain family member 23 (682 aa).

Positions 29 to 210 (PVPCDLRTKV…AIWDNYLQQA (182 aa)) constitute a Rab-GAP TBC domain. In terms of domain architecture, Rhodanese spans 318–426 (DGVRFFVVDC…GFMALQQHLA (109 aa)).

Its subcellular location is the golgi apparatus. The protein resides in the trans-Golgi network. The protein localises to the cytoplasmic vesicle. Putative Rab GTPase-activating protein which plays a role in vesicular trafficking. Involved in endosome-to-Golgi trafficking. Acts as a bridging protein by binding simultaneously to golgins, located at the trans-Golgi, and to the WASH complex, located on endosome-derived vesicles. Plays a role in brain development. May act as a general inhibitor of innate immunity signaling. This is TBC1 domain family member 23 (tbc1d23) from Xenopus laevis (African clawed frog).